Reading from the N-terminus, the 126-residue chain is C-type natriuretic peptide 1 (126 aa).

The N-terminal stretch at 1 to 22 (MLCPALLCAALLLLTPVEITDA) is a signal peptide. Residues 23-104 (RALQQPSDAA…KRAEPDRSRR (82 aa)) constitute a propeptide that is removed on maturation. An intrachain disulfide couples cysteine 110 to cysteine 126.

Belongs to the natriuretic peptide family.

The protein resides in the secreted. In terms of biological role, exhibits natriuretic and vasodepressant activity. Has cGMP-stimulating activity. May help to regulate body fluid homeostasis in a variety of aquatic environments. The protein is C-type natriuretic peptide 1 of Takifugu rubripes (Japanese pufferfish).